Consider the following 148-residue polypeptide: Small ribosomal subunit protein eS6 (148 aa).

It belongs to the eukaryotic ribosomal protein eS6 family.

The chain is Small ribosomal subunit protein eS6 from Pyrobaculum aerophilum (strain ATCC 51768 / DSM 7523 / JCM 9630 / CIP 104966 / NBRC 100827 / IM2).